Consider the following 104-residue polypeptide: U20-lycotoxin-Ls1c (104 aa).

Positions 1–30 (MFSTSDQVSKMNSRILSALLILGIATCVIA) are cleaved as a signal peptide. The region spanning 31 to 76 (GGFCPKSRHPQCDLSYKINDCCAQSDCRVGSVCCVEGCGNVCRAES) is the WAP domain. 5 disulfide bridges follow: C34–C64, C42–C68, C51–C63, C52–C90, and C57–C72.

It belongs to the venom protein 11 family. 02 (wap-2) subfamily. Post-translationally, contains 5 disulfide bonds. As to expression, expressed by the venom gland.

It is found in the secreted. In terms of biological role, has antibacterial activity. This Lycosa singoriensis (Wolf spider) protein is U20-lycotoxin-Ls1c.